A 485-amino-acid polypeptide reads, in one-letter code: Adenosylhomocysteinase (485 aa).

The substrate site is built by T60, D146, and E208. 209 to 211 (TTT) is a binding site for NAD(+). Substrate-binding residues include K238 and D242. Residues N243, 272–277 (GYGDVG), E295, N330, 351–353 (IGH), and N399 contribute to the NAD(+) site.

Belongs to the adenosylhomocysteinase family. The cofactor is NAD(+).

Its subcellular location is the cytoplasm. The catalysed reaction is S-adenosyl-L-homocysteine + H2O = L-homocysteine + adenosine. It participates in amino-acid biosynthesis; L-homocysteine biosynthesis; L-homocysteine from S-adenosyl-L-homocysteine: step 1/1. May play a key role in the regulation of the intracellular concentration of adenosylhomocysteine. In Streptomyces coelicolor (strain ATCC BAA-471 / A3(2) / M145), this protein is Adenosylhomocysteinase.